A 175-amino-acid polypeptide reads, in one-letter code: Large ribosomal subunit protein uL6 (175 aa).

It belongs to the universal ribosomal protein uL6 family. Part of the 50S ribosomal subunit.

In terms of biological role, this protein binds to the 23S rRNA, and is important in its secondary structure. It is located near the subunit interface in the base of the L7/L12 stalk, and near the tRNA binding site of the peptidyltransferase center. The protein is Large ribosomal subunit protein uL6 of Xanthomonas campestris pv. campestris (strain 8004).